We begin with the raw amino-acid sequence, 127 residues long: Glycine cleavage system H protein (127 aa).

Positions 24–106 (TATLGISAFA…YGEGWLVKVQ (83 aa)) constitute a Lipoyl-binding domain. K65 is subject to N6-lipoyllysine.

This sequence belongs to the GcvH family. As to quaternary structure, the glycine cleavage system is composed of four proteins: P, T, L and H. It depends on (R)-lipoate as a cofactor.

The glycine cleavage system catalyzes the degradation of glycine. The H protein shuttles the methylamine group of glycine from the P protein to the T protein. This chain is Glycine cleavage system H protein, found in Thermosynechococcus vestitus (strain NIES-2133 / IAM M-273 / BP-1).